A 130-amino-acid chain; its full sequence is Large ribosomal subunit protein bL19 (130 aa).

It belongs to the bacterial ribosomal protein bL19 family.

This protein is located at the 30S-50S ribosomal subunit interface and may play a role in the structure and function of the aminoacyl-tRNA binding site. This Mycoplasma capricolum subsp. capricolum (strain California kid / ATCC 27343 / NCTC 10154) protein is Large ribosomal subunit protein bL19.